The following is a 310-amino-acid chain: Transcription factor RAX3 (310 aa).

HTH myb-type domains are found at residues 9 to 62 (KANV…LNYL) and 63 to 117 (RPNI…KKKL). DNA-binding regions (H-T-H motif) lie at residues 38–62 (WIAL…LNYL) and 90–113 (WSII…NTRL).

Ubiquitous.

It is found in the nucleus. In terms of biological role, transcription activator. Positively regulates axillary meristems (AMs) formation and development, especially during inflorescence. The sequence is that of Transcription factor RAX3 (RAX3) from Arabidopsis thaliana (Mouse-ear cress).